We begin with the raw amino-acid sequence, 964 residues long: Probable LRR receptor-like serine/threonine-protein kinase IRK (964 aa).

The signal sequence occupies residues 1 to 20 (MYKALIFTVLLVSAVAPVRS). The Extracellular segment spans residues 21 to 603 (LDPPLNDDVL…GHKRILLSIS (583 aa)). LRR repeat units lie at residues 92 to 116 (LQFLHKLSLSNNNLTGIINPNMLLS), 117 to 141 (LVNLKVVDLSSNGLSGSLPDEFFRQ), 143 to 166 (GSLRVLSLAKNKLTGKIPVSISSC), 168 to 190 (SLAALNLSSNGFSGSMPLGIWSL), 191 to 214 (NTLRSLDLSRNELEGEFPEKIDRL), 215 to 238 (NNLRALDLSRNRLSGPIPSEIGSC), 240 to 261 (LLKTIDLSENSLSGSLPNTFQQ), 263 to 286 (SLCYSLNLGKNALEGEVPKWIGEM), 287 to 310 (RSLETLDLSMNKFSGQVPDSIGNL), 312 to 334 (ALKVLNFSGNGLIGSLPVSTANC), and 335 to 358 (INLLALDLSGNSLTGKLPMWLFQD). An N-linked (GlcNAc...) asparagine glycan is attached at Asn104. N-linked (GlcNAc...) asparagine glycosylation occurs at Asn173. An N-linked (GlcNAc...) asparagine glycan is attached at Asn317. Asn370 carries an N-linked (GlcNAc...) asparagine glycan. LRR repeat units lie at residues 375–399 (IKKIQVLDLSHNAFSGEIGAGLGDL), 400–423 (RDLEGLHLSRNSLTGPIPSTIGEL), 425–447 (HLSVLDVSHNQLNGMIPRETGGA), 448–471 (VSLEELRLENNLLEGNIPSSIKNC), 472–495 (SSLRSLILSHNKLLGSIPPELAKL), 496–519 (TRLEEVDLSFNELAGTLPKQLANL), and 521–544 (YLHTFNISHNHLFGELPAGGIFNG). N-linked (GlcNAc...) asparagine glycosylation occurs at Asn470. Residues Asn526, Asn562, and Asn578 are each glycosylated (N-linked (GlcNAc...) asparagine). The chain crosses the membrane as a helical span at residues 604–624 (SLIAISAAAAIVVGVIAITVL). The Cytoplasmic segment spans residues 625–964 (NLRVRASTVS…SGSSDELGSS (340 aa)). A Protein kinase domain is found at 678–951 (LNKDCELGRG…GEAVNILRMI (274 aa)). ATP contacts are provided by residues 684-692 (LGRGGFGAV) and Lys706.

The protein belongs to the protein kinase superfamily. Ser/Thr protein kinase family. In terms of assembly, interacts with IRKI. In terms of processing, autophosphorylated. Highly expressed in root tips, shoot apices and developing flowers.

It is found in the cell membrane. It carries out the reaction L-seryl-[protein] + ATP = O-phospho-L-seryl-[protein] + ADP + H(+). The enzyme catalyses L-threonyl-[protein] + ATP = O-phospho-L-threonyl-[protein] + ADP + H(+). The protein is Probable LRR receptor-like serine/threonine-protein kinase IRK of Arabidopsis thaliana (Mouse-ear cress).